The primary structure comprises 384 residues: MAKHLFTSESVSEGHPDKIADQISDAVLDAILEQDPKARVACETYVKTGMVMVGGEVTTSAWVDIEEITRKTVREIGYTHSDMGFDADSCAILNAIGKQSPDINQGVDRADPKEQGAGDQGLMFGYANNETDVLMPAPITYSHKLVKRQSEVRKDKTLPWLRPDAKSQVTFAYNNDGSIAGIDAVVLSTQHREDVSQADLIEGVMETIIKPVLPAKWLSKDTKYFINPTGRFVIGGPVGDCGLTGRKIIVDTYGGMARHGGGAFSGKDPSKVDRSAAYAARYVAKNIVAAGLADRCEIQVSYAIGVAEPTSISIETFGTAKVAEELLIDLVRRHFDLRPYGLTEMLNLARPIYQATAAYGHFGRNEFPWEATDKAEALRADAGL.

H15 serves as a coordination point for ATP. D17 serves as a coordination point for Mg(2+). Position 43 (E43) interacts with K(+). L-methionine is bound by residues E56 and Q99. The segment at 99-109 (QSPDINQGVDR) is flexible loop. ATP contacts are provided by residues 164 to 166 (DAK), 231 to 232 (RF), D240, 246 to 247 (RK), A263, and K267. An L-methionine-binding site is contributed by D240. K271 contributes to the L-methionine binding site.

Belongs to the AdoMet synthase family. Homotetramer; dimer of dimers. Mg(2+) is required as a cofactor. Requires K(+) as cofactor.

The protein resides in the cytoplasm. The enzyme catalyses L-methionine + ATP + H2O = S-adenosyl-L-methionine + phosphate + diphosphate. It participates in amino-acid biosynthesis; S-adenosyl-L-methionine biosynthesis; S-adenosyl-L-methionine from L-methionine: step 1/1. Functionally, catalyzes the formation of S-adenosylmethionine (AdoMet) from methionine and ATP. The overall synthetic reaction is composed of two sequential steps, AdoMet formation and the subsequent tripolyphosphate hydrolysis which occurs prior to release of AdoMet from the enzyme. The protein is S-adenosylmethionine synthase of Shewanella piezotolerans (strain WP3 / JCM 13877).